Consider the following 758-residue polypeptide: Probable TonB-dependent receptor NMB0964 (758 aa).

An N-terminal signal peptide occupies residues 1–24 (MAQTTLKPIVLSILLINTPLLAQA). One can recognise a TBDR plug domain in the interval 50-161 (LLHTSTASDK…VAGLVDVADG (112 aa)). One can recognise a TBDR beta-barrel domain in the interval 171–758 (GVSGELGLRL…SFTGGVNVKF (588 aa)). The TonB C-terminal box signature appears at 741 to 758 (SDTPQMGRSFTGGVNVKF).

The protein belongs to the TonB-dependent receptor family.

The protein localises to the cell outer membrane. In terms of biological role, probable receptor, TonB-dependent. The protein is Probable TonB-dependent receptor NMB0964 of Neisseria meningitidis serogroup B (strain ATCC BAA-335 / MC58).